A 383-amino-acid chain; its full sequence is S-adenosylmethionine synthase (383 aa).

ATP is bound at residue His15. Asp17 is a Mg(2+) binding site. Position 43 (Glu43) interacts with K(+). L-methionine is bound by residues Glu56 and Gln99. A flexible loop region spans residues 99–109; it reads QSPDINQGVDK. ATP is bound by residues 164-166, 230-231, Asp239, 245-246, Ala262, and Lys266; these read DAK, RF, and RK. Asp239 contacts L-methionine. Residue Lys270 participates in L-methionine binding.

It belongs to the AdoMet synthase family. As to quaternary structure, homotetramer; dimer of dimers. Requires Mg(2+) as cofactor. K(+) is required as a cofactor.

The protein resides in the cytoplasm. The enzyme catalyses L-methionine + ATP + H2O = S-adenosyl-L-methionine + phosphate + diphosphate. It functions in the pathway amino-acid biosynthesis; S-adenosyl-L-methionine biosynthesis; S-adenosyl-L-methionine from L-methionine: step 1/1. Catalyzes the formation of S-adenosylmethionine (AdoMet) from methionine and ATP. The overall synthetic reaction is composed of two sequential steps, AdoMet formation and the subsequent tripolyphosphate hydrolysis which occurs prior to release of AdoMet from the enzyme. The polypeptide is S-adenosylmethionine synthase (Vibrio atlanticus (strain LGP32) (Vibrio splendidus (strain Mel32))).